A 218-amino-acid polypeptide reads, in one-letter code: UPF0329 protein ECU10_1860 (218 aa).

It belongs to the UPF0329 family.

The protein is UPF0329 protein ECU10_1860 of Encephalitozoon cuniculi (strain GB-M1) (Microsporidian parasite).